A 955-amino-acid polypeptide reads, in one-letter code: 2-oxoglutarate dehydrogenase E1 component (955 aa).

This sequence belongs to the alpha-ketoglutarate dehydrogenase family. In terms of assembly, homodimer. Part of the 2-oxoglutarate dehydrogenase (OGDH) complex composed of E1 (2-oxoglutarate dehydrogenase), E2 (dihydrolipoamide succinyltransferase) and E3 (dihydrolipoamide dehydrogenase); the complex contains multiple copies of the three enzymatic components (E1, E2 and E3). The cofactor is thiamine diphosphate.

It catalyses the reaction N(6)-[(R)-lipoyl]-L-lysyl-[protein] + 2-oxoglutarate + H(+) = N(6)-[(R)-S(8)-succinyldihydrolipoyl]-L-lysyl-[protein] + CO2. Its function is as follows. E1 component of the 2-oxoglutarate dehydrogenase (OGDH) complex which catalyzes the decarboxylation of 2-oxoglutarate, the first step in the conversion of 2-oxoglutarate to succinyl-CoA and CO(2). The polypeptide is 2-oxoglutarate dehydrogenase E1 component (Bacillus cereus (strain B4264)).